The chain runs to 747 residues: Histone-lysine N-methyltransferase EZH1 (747 aa).

The segment at 188–231 (DEEEDGHNDPSDGKQDDSKEDLPVTRKRKRHAIEGNKKSSKKQF) is disordered. The span at 194–211 (HNDPSDGKQDDSKEDLPV) shows a compositional bias: basic and acidic residues. Lys-327 is covalently cross-linked (Glycyl lysine isopeptide (Lys-Gly) (interchain with G-Cter in SUMO2)). Residues 368 to 414 (VSASCSNASASAMAETKEGDSDRDTGNDWASSSSEANSRCQTPTKQK) form a disordered region. Residues 369–381 (SASCSNASASAMA) show a composition bias toward low complexity. The span at 382–393 (ETKEGDSDRDTG) shows a compositional bias: basic and acidic residues. Polar residues predominate over residues 395-414 (DWASSSSEANSRCQTPTKQK). A Nuclear localization signal motif is present at residues 491-496 (QKKKRK). Positions 504–606 (CRKIQLKKDN…CKVVSCKNCS (103 aa)) constitute a CXC domain. One can recognise an SET domain in the interval 613-728 (KHLLLAPSDV…AGEELFFDYR (116 aa)).

It belongs to the class V-like SAM-binding methyltransferase superfamily. Histone-lysine methyltransferase family. EZ subfamily. Component of the PRC2/EED-EZH1 complex, which includes EED, EZH1, SUZ12, RBBP4 and AEBP2. The PRC2/EED-EZH1 is less abundant than the PRC2/EED-EZH2 complex, has weak methyltransferase activity and compacts chromatin in the absence of the methyltransferase cofactor S-adenosyl-L-methionine (SAM). Interacts with EZHIP; the interaction blocks EZH1 methyltransferase activity. Expressed at high levels in kidney, adrenal gland, testis and brain.

Its subcellular location is the nucleus. The catalysed reaction is L-lysyl(27)-[histone H3] + 3 S-adenosyl-L-methionine = N(6),N(6),N(6)-trimethyl-L-lysyl(27)-[histone H3] + 3 S-adenosyl-L-homocysteine + 3 H(+). Polycomb group (PcG) protein. Catalytic subunit of the PRC2/EED-EZH1 complex, which methylates 'Lys-27' of histone H3, leading to transcriptional repression of the affected target gene. Able to mono-, di- and trimethylate 'Lys-27' of histone H3 to form H3K27me1, H3K27me2 and H3K27me3, respectively. Required for embryonic stem cell derivation and self-renewal, suggesting that it is involved in safeguarding embryonic stem cell identity. Compared to EZH2-containing complexes, it is less abundant in embryonic stem cells, has weak methyltransferase activity and plays a less critical role in forming H3K27me3, which is required for embryonic stem cell identity and proper differentiation. The chain is Histone-lysine N-methyltransferase EZH1 (Ezh1) from Mus musculus (Mouse).